The primary structure comprises 394 residues: DNA repair protein brc-2 (394 aa).

A compositionally biased stretch (basic and acidic residues) spans 1–12; that stretch reads MGDSSKKVKDSF. Disordered regions lie at residues 1 to 30 and 56 to 136; these read MGDS…VPIS and MLNS…EKKK. The interval 1-60 is interaction with rad-51; that stretch reads MGDSSKKVKDSFDTISEPDSFDEPKGVPISMEPVFSTAAGIRIDVKQESIDKSKKMLNSD. The tract at residues 28–62 is BRCA2 repeat-like region; the sequence is PISMEPVFSTAAGIRIDVKQESIDKSKKMLNSDLK. Residues 56–73 show a composition bias toward low complexity; that stretch reads MLNSDLKSKSSSKGGFSS. Residues 60-89 are interaction with rad-51-DNA complexes; sequence DLKSKSSSKGGFSSPLVRKNNGSSAFVSPF. Residues 124–134 show a composition bias toward basic residues; that stretch reads KKSKKHSKKEK. The segment at 371–389 is required for ssDNA binding; that stretch reads WKDFGSYLKHKEDKKKRRS.

As to quaternary structure, interacts (via N-terminus) with rad-51; regulates rad-51 recruitment to sites of DNA double strand breaks. Expressed in the germline, with highest expression in cells undergoing oogenesis.

Its subcellular location is the nucleus. It is found in the chromosome. In terms of biological role, required for the homologous recombination repair of DNA double strand breaks, thereby playing a role in chromosome integrity. Acts by targeting rad-51 to sites of DNA damage and stabilizing rad-51-DNA filaments by blocking ATP hydrolysis catalyzed by rad-51. Promotes rad-51 mediated displacement-loop (D-loop) formation during strand invasion between the invading single-stranded DNA (ssDNA) and the homologous duplex DNA. Also functions independently of rad-51 in DNA double-strand break (DSB) repair by promoting DNA single-strand annealing (SSA) when the homologous recombination (HR) and non-homologous end joining (NHEJ) pathways are compromised. Binds selectively to single-stranded (ssDNA) via its C-terminus. Involved in telomere maintenance and replicative senescence. In Caenorhabditis elegans, this protein is DNA repair protein brc-2.